A 78-amino-acid chain; its full sequence is Defensin-like protein 173 (78 aa).

The first 23 residues, 1–23 (MAKAPSPLVFPIIFLIIFALVEP), serve as a signal peptide directing secretion. 4 disulfide bridges follow: Cys27–Cys71, Cys34–Cys56, Cys40–Cys65, and Cys44–Cys67.

This sequence belongs to the DEFL family.

The protein resides in the secreted. In Arabidopsis thaliana (Mouse-ear cress), this protein is Defensin-like protein 173 (LCR63).